A 158-amino-acid polypeptide reads, in one-letter code: NADH-quinone oxidoreductase subunit B (158 aa).

[4Fe-4S] cluster is bound by residues Cys-37, Cys-38, Cys-102, and Cys-132.

The protein belongs to the complex I 20 kDa subunit family. In terms of assembly, NDH-1 is composed of 14 different subunits. Subunits NuoB, C, D, E, F, and G constitute the peripheral sector of the complex. [4Fe-4S] cluster is required as a cofactor.

The protein resides in the cell inner membrane. The catalysed reaction is a quinone + NADH + 5 H(+)(in) = a quinol + NAD(+) + 4 H(+)(out). NDH-1 shuttles electrons from NADH, via FMN and iron-sulfur (Fe-S) centers, to quinones in the respiratory chain. Couples the redox reaction to proton translocation (for every two electrons transferred, four hydrogen ions are translocated across the cytoplasmic membrane), and thus conserves the redox energy in a proton gradient. In Legionella pneumophila (strain Paris), this protein is NADH-quinone oxidoreductase subunit B.